Consider the following 761-residue polypeptide: Neurotrypsin (761 aa).

An N-terminal signal peptide occupies residues 1–21 (MALARCVLAVILGVLSEVARA). The disordered stretch occupies residues 26–88 (HSPLHRPHPS…PTISRRCGAG (63 aa)). The segment covering 54–63 (TPRFPLPPRA) has biased composition (pro residues). In terms of domain architecture, Kringle spans 85–157 (CGAGEPWGNA…GKVDWGYCDC (73 aa)). 17 disulfide bridges follow: cysteine 85-cysteine 157, cysteine 101-cysteine 141, cysteine 130-cysteine 155, cysteine 191-cysteine 255, cysteine 204-cysteine 265, cysteine 235-cysteine 245, cysteine 298-cysteine 361, cysteine 311-cysteine 371, cysteine 341-cysteine 351, cysteine 411-cysteine 475, cysteine 424-cysteine 485, cysteine 455-cysteine 465, cysteine 505-cysteine 636, cysteine 547-cysteine 563, cysteine 651-cysteine 717, cysteine 680-cysteine 694, and cysteine 707-cysteine 736. The N-linked (GlcNAc...) asparagine glycan is linked to asparagine 93. SRCR domains follow at residues 166-267 (IRLV…SCAP), 273-373 (IRLS…TCYP), and 386-487 (IRLM…ICDY). Residues 505–516 (CGLRLLHRRQKR) form a zymogen activation region region. The region spanning 517–760 (IIGGNNSLRG…FVPWIKSVTS (244 aa)) is the Peptidase S1 domain. A glycan (N-linked (GlcNAc...) asparagine) is linked at asparagine 521. The active-site Charge relay system is histidine 562. Asparagine 569 carries an N-linked (GlcNAc...) asparagine glycan. Aspartate 612 acts as the Charge relay system in catalysis. The Charge relay system role is filled by serine 711.

It belongs to the peptidase S1 family.

The protein localises to the secreted. Plays a role in neuronal plasticity and the proteolytic action may subserve structural reorganizations associated with learning and memory operations. The sequence is that of Neurotrypsin (Prss12) from Rattus norvegicus (Rat).